The following is a 634-amino-acid chain: UPF0329 protein ECU11_2090 (634 aa).

Composition is skewed to basic and acidic residues over residues 354-365 and 397-407; these read REEREKREESKG and GESKEEDRGEE. The interval 354 to 438 is disordered; it reads REEREKREES…KGSGEKRISE (85 aa). Residues 408–417 are compositionally biased toward acidic residues; that stretch reads GGVEAEDPLE.

It belongs to the UPF0329 family.

This Encephalitozoon cuniculi (strain GB-M1) (Microsporidian parasite) protein is UPF0329 protein ECU11_2090.